The primary structure comprises 145 residues: Large ribosomal subunit protein bL19 (145 aa).

Positions 112 to 130 are enriched in basic and acidic residues; sequence GKSARIKERRPAKAVEKTS. The disordered stretch occupies residues 112-145; the sequence is GKSARIKERRPAKAVEKTSKPASAKKPAAKANKK.

This sequence belongs to the bacterial ribosomal protein bL19 family.

Its function is as follows. This protein is located at the 30S-50S ribosomal subunit interface and may play a role in the structure and function of the aminoacyl-tRNA binding site. The chain is Large ribosomal subunit protein bL19 from Malacoplasma penetrans (strain HF-2) (Mycoplasma penetrans).